Here is a 1170-residue protein sequence, read N- to C-terminus: Error-prone DNA polymerase (1170 aa).

Disordered regions lie at residues 867–899 (RGAR…LHND) and 1129–1170 (IPHG…RDFH). A compositionally biased stretch (basic and acidic residues) spans 886 to 899 (PRNDNDRQIPLHND).

Belongs to the DNA polymerase type-C family. DnaE2 subfamily.

The protein localises to the cytoplasm. It catalyses the reaction DNA(n) + a 2'-deoxyribonucleoside 5'-triphosphate = DNA(n+1) + diphosphate. Its function is as follows. DNA polymerase involved in damage-induced mutagenesis and translesion synthesis (TLS). It is not the major replicative DNA polymerase. This Bradyrhizobium sp. (strain ORS 278) protein is Error-prone DNA polymerase.